The following is a 149-amino-acid chain: MEQTFIMIKPDGVQRGLIGEVICRFEKKGFTLKGLKLISVERSFAEKHYEDLSSKSFFSGLVDYIVSGPVVAMIWEGKNVVLTGRKIIGATNPAASEPGTIRGDFAIDIGRNVIHGSDSVESARKEIALWFPDGPVNWQSSVHPWVYET.

M1 carries the N-acetylmethionine modification. Positions 9, 57, 85, 91, 102, and 112 each coordinate ATP. Residue H115 is the Pros-phosphohistidine intermediate of the active site.

Belongs to the NDK family. In terms of assembly, interacts with CAT1, CAT2 and CAT3. The cofactor is Mg(2+).

It is found in the peroxisome. Its subcellular location is the nucleus. It localises to the cytoplasm. It catalyses the reaction a 2'-deoxyribonucleoside 5'-diphosphate + ATP = a 2'-deoxyribonucleoside 5'-triphosphate + ADP. It carries out the reaction a ribonucleoside 5'-diphosphate + ATP = a ribonucleoside 5'-triphosphate + ADP. Major role in the synthesis of nucleoside triphosphates other than ATP. The ATP gamma phosphate is transferred to the NDP beta phosphate via a ping-pong mechanism, using a phosphorylated active-site intermediate. Plays a role in response to reactive oxygen species (ROS) stress. The polypeptide is Nucleoside diphosphate kinase 1 (NDK1) (Arabidopsis thaliana (Mouse-ear cress)).